We begin with the raw amino-acid sequence, 759 residues long: Subtilisin-like serine-protease S (759 aa).

The N-terminal stretch at 1-22 is a signal peptide; sequence MGSAKILSFTLLLFVGYTLVHG. One can recognise an Inhibitor I9 domain in the interval 28–105; sequence YIVYMGDRSH…SVFESKMNKL (78 aa). In terms of domain architecture, Peptidase S8 spans 110–613; the sequence is SWDFLGLDTV…SGHVNPVASL (504 aa). The active-site Charge relay system is the Asp-139. Asn-170 carries an N-linked (GlcNAc...) asparagine glycan. The active-site Charge relay system is the His-215. Residues Asn-230 and Asn-388 are each glycosylated (N-linked (GlcNAc...) asparagine). The 73-residue stretch at 390–462 folds into the PA domain; it reads SFCKEHTLDP…MIGQDAVEEL (73 aa). Ser-545 serves as the catalytic Charge relay system. N-linked (GlcNAc...) asparagine glycosylation is found at Asn-593, Asn-642, and Asn-671.

It belongs to the peptidase S8 family.

It localises to the secreted. The protein resides in the extracellular space. It is found in the apoplast. Functionally, required for arbuscular mycorrhiza (AM) development during AM symbiosis with AM fungi (e.g. Glomeromycota intraradices). The protein is Subtilisin-like serine-protease S of Lotus japonicus (Lotus corniculatus var. japonicus).